The chain runs to 462 residues: Probable protein phosphatase 2C 1 (462 aa).

Residues 60-362 (SSCIFTQQGR…DDCAVVCLFL (303 aa)) enclose the PPM-type phosphatase domain. Mn(2+) contacts are provided by Asp95, Gly96, Asp307, and Asp353. 2 disordered regions span residues 369-394 (ETSD…QGAE) and 421-443 (EADN…LEGV). The segment covering 376–385 (QCFSSATNAV) has biased composition (polar residues). The span at 424 to 434 (NAEKEKTREGE) shows a compositional bias: basic and acidic residues.

This sequence belongs to the PP2C family. In terms of assembly, interacts with GCN5. The cofactor is Mg(2+). Mn(2+) serves as cofactor.

It carries out the reaction O-phospho-L-seryl-[protein] + H2O = L-seryl-[protein] + phosphate. The catalysed reaction is O-phospho-L-threonyl-[protein] + H2O = L-threonyl-[protein] + phosphate. Its function is as follows. May act as negative regulator of GCN5. In Arabidopsis thaliana (Mouse-ear cress), this protein is Probable protein phosphatase 2C 1 (PPC6-6).